We begin with the raw amino-acid sequence, 217 residues long: Uracil-DNA glycosylase (217 aa).

Catalysis depends on aspartate 62, which acts as the Proton acceptor.

Belongs to the uracil-DNA glycosylase (UDG) superfamily. UNG family.

It localises to the cytoplasm. It catalyses the reaction Hydrolyzes single-stranded DNA or mismatched double-stranded DNA and polynucleotides, releasing free uracil.. Functionally, excises uracil residues from the DNA which can arise as a result of misincorporation of dUMP residues by DNA polymerase or due to deamination of cytosine. The polypeptide is Uracil-DNA glycosylase (Streptococcus pyogenes serotype M28 (strain MGAS6180)).